Consider the following 442-residue polypeptide: Tubulin beta chain (442 aa).

8 residues coordinate GTP: glutamine 11, glutamate 69, serine 138, glycine 142, threonine 143, glycine 144, asparagine 204, and asparagine 226. Residue glutamate 69 participates in Mg(2+) binding.

Belongs to the tubulin family. Dimer of alpha and beta chains. A typical microtubule is a hollow water-filled tube with an outer diameter of 25 nm and an inner diameter of 15 nM. Alpha-beta heterodimers associate head-to-tail to form protofilaments running lengthwise along the microtubule wall with the beta-tubulin subunit facing the microtubule plus end conferring a structural polarity. Microtubules usually have 13 protofilaments but different protofilament numbers can be found in some organisms and specialized cells. Mg(2+) serves as cofactor.

Its subcellular location is the cytoplasm. The protein localises to the cytoskeleton. Its function is as follows. Tubulin is the major constituent of microtubules, a cylinder consisting of laterally associated linear protofilaments composed of alpha- and beta-tubulin heterodimers. Microtubules grow by the addition of GTP-tubulin dimers to the microtubule end, where a stabilizing cap forms. Below the cap, tubulin dimers are in GDP-bound state, owing to GTPase activity of alpha-tubulin. This chain is Tubulin beta chain (TUB-B), found in Pneumocystis carinii.